The following is a 1690-amino-acid chain: rRNA biogenesis protein rrp5 (1690 aa).

Disordered regions lie at residues 1–42 (MAGN…GASS) and 59–90 (FMESASGTAELSKKTRPKKKGSKKSSKSELDN). Over residues 11–32 (ASEGSDSQGNERISSLSANEAT) the composition is skewed to polar residues. Residues 72-83 (KTRPKKKGSKKS) show a composition bias toward basic residues. S1 motif domains lie at 109 to 209 (GSLI…LSLK), 226 to 289 (GSMI…LTAT), 306 to 376 (GDYI…VSFL), 398 to 473 (GFIV…LSFQ), 490 to 559 (GQFV…LTLK), 579 to 648 (GTQT…VGCR), 666 to 739 (GSVL…LSLK), 761 to 830 (GIKY…MSFK), 866 to 942 (GKIT…ISHR), 973 to 1044 (GDEV…IGPL), 1053 to 1122 (GSRL…LSAR), 1147 to 1216 (GDIC…MSLK), and 1236 to 1307 (GSNL…LGLK). The interval 1313 to 1424 (SDSDISMSDN…EEKDLDEIPS (112 aa)) is disordered. Composition is skewed to acidic residues over residues 1348–1367 (QSEEVENLESAGDEDEEEEP), 1390–1400 (DTEDSEDEEDE), and 1412–1421 (FDDEEKDLDE). Phosphothreonine is present on T1391. S1394 is modified (phosphoserine). HAT repeat units follow at residues 1420 to 1452 (DEIPSTAADFERQLLSSPNSSLLWISYMAYHLN), 1526 to 1558 (GKVDLADEYMQLMLKNFKQVPSVWIQYATFLLN), and 1596 to 1628 (GDPERGRTIFEGLLSSYPKRLDLWNVLIDMEMK). Phosphoserine occurs at positions 1684 and 1686.

As to quaternary structure, component of the ribosomal small subunit (SSU) processome.

It is found in the nucleus. Its subcellular location is the nucleolus. Functionally, involved in the biogenesis of rRNA. Required for the formation of 18S and 5.8S rRNA. The sequence is that of rRNA biogenesis protein rrp5 from Schizosaccharomyces pombe (strain 972 / ATCC 24843) (Fission yeast).